The following is a 215-amino-acid chain: 3-demethoxyubiquinol 3-hydroxylase (215 aa).

Positions 64, 94, 97, 146, 178, and 181 each coordinate Fe cation.

Belongs to the COQ7 family. Requires Fe cation as cofactor.

The protein resides in the cell membrane. It catalyses the reaction a 5-methoxy-2-methyl-3-(all-trans-polyprenyl)benzene-1,4-diol + AH2 + O2 = a 3-demethylubiquinol + A + H2O. It participates in cofactor biosynthesis; ubiquinone biosynthesis. Its function is as follows. Catalyzes the hydroxylation of 2-nonaprenyl-3-methyl-6-methoxy-1,4-benzoquinol during ubiquinone biosynthesis. The chain is 3-demethoxyubiquinol 3-hydroxylase from Coxiella burnetii (strain Dugway 5J108-111).